The chain runs to 163 residues: Probable chemoreceptor glutamine deamidase CheD (163 aa).

The protein belongs to the CheD family.

The enzyme catalyses L-glutaminyl-[protein] + H2O = L-glutamyl-[protein] + NH4(+). Probably deamidates glutamine residues to glutamate on methyl-accepting chemotaxis receptors (MCPs), playing an important role in chemotaxis. The protein is Probable chemoreceptor glutamine deamidase CheD of Pyrococcus abyssi (strain GE5 / Orsay).